A 211-amino-acid chain; its full sequence is Uracil phosphoribosyltransferase (211 aa).

Residues Arg79, Arg104, and 131 to 139 (DPMLATGGS) each bind 5-phospho-alpha-D-ribose 1-diphosphate. Uracil is bound by residues Ile196 and 201-203 (GDA). Asp202 is a 5-phospho-alpha-D-ribose 1-diphosphate binding site.

This sequence belongs to the UPRTase family. It depends on Mg(2+) as a cofactor.

It carries out the reaction UMP + diphosphate = 5-phospho-alpha-D-ribose 1-diphosphate + uracil. It functions in the pathway pyrimidine metabolism; UMP biosynthesis via salvage pathway; UMP from uracil: step 1/1. Allosterically activated by GTP. Functionally, catalyzes the conversion of uracil and 5-phospho-alpha-D-ribose 1-diphosphate (PRPP) to UMP and diphosphate. The protein is Uracil phosphoribosyltransferase of Lactococcus lactis subsp. cremoris (strain SK11).